The following is a 505-amino-acid chain: ATP nucleosidase Cap17 (505 aa).

Positions 1 to 229 (MTNTNNEYVL…RLSEIAVELL (229 aa)) are cyclic oligonucleotide sensing-domain. The interval 239-505 (LHTPSVLILT…DYLQHGWIRA (267 aa)) is purine nucleoside phosphorylase domain.

Belongs to the Cap17 family.

The catalysed reaction is ATP + H2O = D-ribose 5-triphosphate + adenine. The enzyme catalyses dATP + H2O = 2-deoxyribose 5-triphosphate + adenine. Functionally, effector protein with (d)ATP degrading activity of a CBASS antivirus system. CBASS (cyclic oligonucleotide-based antiphage signaling system) provides immunity against bacteriophage. A CD-NTase protein synthesizes cyclic nucleotides in response to infection; these serve as specific second messenger signals. The signals activate a diverse range of effectors, leading to bacterial cell death and thus abortive phage infection. A type III CBASS system. Expression of this CBASS system (Cap18-Cap6-Cap7-CdnC-CapW-Cap17) in a susceptible E.coli (strain MG1655) confers resistance to bacteriophage P1, leading to cell lysis. By 50 minutes post-infection, ATP levels are markedly reduced while dATP has been eliminated. The C-terminal purine nucleoside phosphorylase (PNP) domain cleaves the N-glycosidic bond of (d)ATP to release adenine and a sugar triphosphate; has no activity on other (d)NTPs, nor on DNA or RNA. In vivo during phage infection has pleoitropic effects on nucleotide accumulation. This protein may be activated by the cognate CD-NTase (CdnC). In Escherichia coli (strain KTE188), this protein is ATP nucleosidase Cap17.